A 146-amino-acid polypeptide reads, in one-letter code: Hemoglobin subunit beta (146 aa).

N-acetylvaline is present on valine 1. Positions 2 to 146 (HLTPEEKNAV…VANALAHKYH (145 aa)) constitute a Globin domain. Phosphothreonine is present on threonine 12. Serine 44 is modified (phosphoserine). At lysine 59 the chain carries N6-acetyllysine. Heme b is bound at residue histidine 63. At lysine 82 the chain carries N6-acetyllysine. Residue histidine 92 participates in heme b binding. Cysteine 93 carries the post-translational modification S-nitrosocysteine. Position 144 is an N6-acetyllysine (lysine 144).

Belongs to the globin family. As to quaternary structure, heterotetramer of two alpha chains and two beta chains. As to expression, red blood cells.

Involved in oxygen transport from the lung to the various peripheral tissues. The polypeptide is Hemoglobin subunit beta (HBB) (Theropithecus gelada (Gelada baboon)).